The chain runs to 264 residues: Nicotinamide N-methyltransferase (264 aa).

The residue at position 18 (Arg-18) is a Citrulline; alternate. Residues Tyr-20 and Tyr-25 each coordinate S-adenosyl-L-methionine. Lys-39 is modified (N6-acetyllysine). Positions 63, 69, 85, and 90 each coordinate S-adenosyl-L-methionine. A Citrulline; alternate modification is found at Arg-132. S-adenosyl-L-methionine is bound by residues 142–143 and Thr-163; that span reads DV. Arg-181 bears the Citrulline; alternate mark. Nicotinamide is bound by residues Asp-197 and Ser-213.

Belongs to the class I-like SAM-binding methyltransferase superfamily. NNMT/PNMT/TEMT family. Monomer. Deiminated by PADI1 and PADI2. Predominantly expressed in the liver. A lower expression is seen in the kidney, lung, skeletal muscle, placenta and heart. Not detected in the brain or pancreas.

Its subcellular location is the cytoplasm. It catalyses the reaction nicotinamide + S-adenosyl-L-methionine = 1-methylnicotinamide + S-adenosyl-L-homocysteine. It functions in the pathway cofactor metabolism. Its pathway is amino-acid degradation. Inactivated by deimination on Arg-132. Catalyzes the N-methylation of nicotinamide using the universal methyl donor S-adenosyl-L-methionine to form N1-methylnicotinamide and S-adenosyl-L-homocysteine, a predominant nicotinamide/vitamin B3 clearance pathway. Plays a central role in regulating cellular methylation potential, by consuming S-adenosyl-L-methionine and limiting its availability for other methyltransferases. Actively mediates genome-wide epigenetic and transcriptional changes through hypomethylation of repressive chromatin marks, such as H3K27me3. In a developmental context, contributes to low levels of the repressive histone marks that characterize pluripotent embryonic stem cell pre-implantation state. Acts as a metabolic regulator primarily on white adipose tissue energy expenditure as well as hepatic gluconeogenesis and cholesterol biosynthesis. In white adipocytes, regulates polyamine flux by consuming S-adenosyl-L-methionine which provides for propylamine group in polyamine biosynthesis, whereas by consuming nicotinamide controls NAD(+) levels through the salvage pathway. Via its product N1-methylnicotinamide regulates protein acetylation in hepatocytes, by repressing the ubiquitination and increasing the stability of SIRT1 deacetylase. Can also N-methylate other pyridines structurally related to nicotinamide and play a role in xenobiotic detoxification. In Homo sapiens (Human), this protein is Nicotinamide N-methyltransferase.